A 270-amino-acid polypeptide reads, in one-letter code: MNNTIISMKEKELRFLKFFHQQKYNVVDFNLIEELDWRRLTHEDLQQMDERSFWQQNKSIYALRNDFTDQLFRYYSNYPTHLKKVAYAGDIIRDNRVIKQVGIENYEPQFDNITQNFLDFQYFIQNVLHDDIQFVILGHYQLIDALLEKNHQTREVMEMIEERNLSGLIQKLTFNHPIIQILKENTLNQLKILSHYLPERHPAMVAIQSWAQWFTDHGITEIHLDVTAQAPRSYYKGIFIKCHLKNTTHSVLTGGYYHGSLEGFGLGLTL.

The protein belongs to the class-II aminoacyl-tRNA synthetase family. HisZ subfamily. In terms of assembly, heteromultimer composed of HisG and HisZ subunits.

It localises to the cytoplasm. It participates in amino-acid biosynthesis; L-histidine biosynthesis; L-histidine from 5-phospho-alpha-D-ribose 1-diphosphate: step 1/9. In terms of biological role, required for the first step of histidine biosynthesis. May allow the feedback regulation of ATP phosphoribosyltransferase activity by histidine. The polypeptide is ATP phosphoribosyltransferase regulatory subunit (hisZ) (Staphylococcus epidermidis (strain ATCC 12228 / FDA PCI 1200)).